The sequence spans 256 residues: Leucyl/phenylalanyl-tRNA--protein transferase (256 aa).

The disordered stretch occupies residues 232 to 256 (DGCTGASRHGPGADMRRGDMSREST). The segment covering 245–256 (DMRRGDMSREST) has biased composition (basic and acidic residues).

The protein belongs to the L/F-transferase family.

The protein resides in the cytoplasm. The enzyme catalyses N-terminal L-lysyl-[protein] + L-leucyl-tRNA(Leu) = N-terminal L-leucyl-L-lysyl-[protein] + tRNA(Leu) + H(+). It carries out the reaction N-terminal L-arginyl-[protein] + L-leucyl-tRNA(Leu) = N-terminal L-leucyl-L-arginyl-[protein] + tRNA(Leu) + H(+). The catalysed reaction is L-phenylalanyl-tRNA(Phe) + an N-terminal L-alpha-aminoacyl-[protein] = an N-terminal L-phenylalanyl-L-alpha-aminoacyl-[protein] + tRNA(Phe). Functions in the N-end rule pathway of protein degradation where it conjugates Leu, Phe and, less efficiently, Met from aminoacyl-tRNAs to the N-termini of proteins containing an N-terminal arginine or lysine. This Chromohalobacter salexigens (strain ATCC BAA-138 / DSM 3043 / CIP 106854 / NCIMB 13768 / 1H11) protein is Leucyl/phenylalanyl-tRNA--protein transferase.